A 369-amino-acid chain; its full sequence is Putative agmatine deiminase (369 aa).

Cys361 serves as the catalytic Amidino-cysteine intermediate.

It belongs to the agmatine deiminase family.

The catalysed reaction is agmatine + H2O = N-carbamoylputrescine + NH4(+). In Streptococcus mutans serotype c (strain ATCC 700610 / UA159), this protein is Putative agmatine deiminase.